A 392-amino-acid polypeptide reads, in one-letter code: GTPase Obg (392 aa).

Residues 1–159 enclose the Obg domain; that stretch reads MKFVDEATIL…RDLQLELMLL (159 aa). The tract at residues 127–148 is disordered; the sequence is NSRFKSSVNRSPRQKTMGTPGD. The segment covering 129-143 has biased composition (polar residues); that stretch reads RFKSSVNRSPRQKTM. In terms of domain architecture, OBG-type G spans 160–333; that stretch reads ADVGMLGMPN…LCWDVMAFII (174 aa). GTP is bound by residues 166–173, 191–195, 213–216, 283–286, and 314–316; these read GMPNAGKS, FTTLV, DIPG, NKID, and SAA. Mg(2+) contacts are provided by Ser173 and Thr193. A compositionally biased stretch (acidic residues) spans 363–386; it reads EQEVEVEDDEEWDEDWDEDDEEGV. The disordered stretch occupies residues 363–392; the sequence is EQEVEVEDDEEWDEDWDEDDEEGVEFIYKR.

This sequence belongs to the TRAFAC class OBG-HflX-like GTPase superfamily. OBG GTPase family. As to quaternary structure, monomer. Mg(2+) serves as cofactor.

Its subcellular location is the cytoplasm. Functionally, an essential GTPase which binds GTP, GDP and possibly (p)ppGpp with moderate affinity, with high nucleotide exchange rates and a fairly low GTP hydrolysis rate. Plays a role in control of the cell cycle, stress response, ribosome biogenesis and in those bacteria that undergo differentiation, in morphogenesis control. This chain is GTPase Obg, found in Enterobacter sp. (strain 638).